Reading from the N-terminus, the 286-residue chain is 4-hydroxybenzoate octaprenyltransferase (286 aa).

7 helical membrane passes run 20–40 (IGIL…ADGM), 43–63 (PMIL…GCAI), 83–103 (LATG…LSLC), 135–155 (FFAM…PMAF), 160–180 (GTVP…VIAY), 209–229 (VAGI…AGIL), and 234–254 (IWFY…YTMI).

It belongs to the UbiA prenyltransferase family. Mg(2+) is required as a cofactor.

The protein resides in the cell inner membrane. The catalysed reaction is all-trans-octaprenyl diphosphate + 4-hydroxybenzoate = 4-hydroxy-3-(all-trans-octaprenyl)benzoate + diphosphate. Its pathway is cofactor biosynthesis; ubiquinone biosynthesis. Its function is as follows. Catalyzes the prenylation of para-hydroxybenzoate (PHB) with an all-trans polyprenyl group. Mediates the second step in the final reaction sequence of ubiquinone-8 (UQ-8) biosynthesis, which is the condensation of the polyisoprenoid side chain with PHB, generating the first membrane-bound Q intermediate 3-octaprenyl-4-hydroxybenzoate. In Nitrosomonas eutropha (strain DSM 101675 / C91 / Nm57), this protein is 4-hydroxybenzoate octaprenyltransferase.